Here is a 774-residue protein sequence, read N- to C-terminus: Protein translocase subunit SecA 2 (774 aa).

ATP contacts are provided by residues glutamine 94, 112–116, and aspartate 501; that span reads GEGKT.

This sequence belongs to the SecA family. Monomer and homodimer. Part of the essential Sec protein translocation apparatus which comprises SecA, SecYEG and auxiliary proteins SecDF. Other proteins may also be involved.

Its subcellular location is the cell membrane. It localises to the cytoplasm. The enzyme catalyses ATP + H2O + cellular proteinSide 1 = ADP + phosphate + cellular proteinSide 2.. Functionally, part of the Sec protein translocase complex. Interacts with the SecYEG preprotein conducting channel. Has a central role in coupling the hydrolysis of ATP to the transfer of proteins into and across the cell membrane, serving as an ATP-driven molecular motor driving the stepwise translocation of polypeptide chains across the membrane. In Mycobacterium sp. (strain JLS), this protein is Protein translocase subunit SecA 2.